Consider the following 168-residue polypeptide: ATP synthase subunit b (168 aa).

The chain crosses the membrane as a helical span at residues 7-26 (FVLSNFIFTLINLWIMYWVL).

Belongs to the ATPase B chain family. F-type ATPases have 2 components, F(1) - the catalytic core - and F(0) - the membrane proton channel. F(1) has five subunits: alpha(3), beta(3), gamma(1), delta(1), epsilon(1). F(0) has three main subunits: a(1), b(2) and c(10-14). The alpha and beta chains form an alternating ring which encloses part of the gamma chain. F(1) is attached to F(0) by a central stalk formed by the gamma and epsilon chains, while a peripheral stalk is formed by the delta and b chains.

It is found in the cell membrane. Functionally, f(1)F(0) ATP synthase produces ATP from ADP in the presence of a proton or sodium gradient. F-type ATPases consist of two structural domains, F(1) containing the extramembraneous catalytic core and F(0) containing the membrane proton channel, linked together by a central stalk and a peripheral stalk. During catalysis, ATP synthesis in the catalytic domain of F(1) is coupled via a rotary mechanism of the central stalk subunits to proton translocation. In terms of biological role, component of the F(0) channel, it forms part of the peripheral stalk, linking F(1) to F(0). The sequence is that of ATP synthase subunit b from Alkaliphilus metalliredigens (strain QYMF).